The chain runs to 321 residues: Glucokinase (321 aa).

Residue 8–13 (GDVGGT) participates in ATP binding.

It belongs to the bacterial glucokinase family.

It localises to the cytoplasm. The catalysed reaction is D-glucose + ATP = D-glucose 6-phosphate + ADP + H(+). The chain is Glucokinase from Salmonella heidelberg (strain SL476).